We begin with the raw amino-acid sequence, 212 residues long: Penicillin-binding protein activator LpoB (212 aa).

Positions 1–19 are cleaved as a signal peptide; that stretch reads MTKMHRYAAIAALAIFLSG. The N-palmitoyl cysteine moiety is linked to residue C20. C20 carries S-diacylglycerol cysteine lipidation. Positions 28-73 are disordered; it reads PVEEVKPAPEQPAQPPQPPVVPSVPTIPQQPGPIEHEDQTGQPAPK. Residues 36-49 are compositionally biased toward pro residues; sequence PEQPAQPPQPPVVP.

It belongs to the LpoB family. As to quaternary structure, interacts with PBP1b.

It is found in the cell outer membrane. Its function is as follows. Regulator of peptidoglycan synthesis that is essential for the function of penicillin-binding protein 1B (PBP1b). The sequence is that of Penicillin-binding protein activator LpoB from Salmonella typhimurium (strain LT2 / SGSC1412 / ATCC 700720).